Reading from the N-terminus, the 45-residue chain is DNA-directed RNA polymerase subunit Rpo12 (45 aa).

3 residues coordinate Zn(2+): C8, C23, and C26.

It belongs to the archaeal Rpo12/eukaryotic RPC10 RNA polymerase subunit family. Part of the RNA polymerase complex. It depends on Zn(2+) as a cofactor.

It localises to the cytoplasm. The catalysed reaction is RNA(n) + a ribonucleoside 5'-triphosphate = RNA(n+1) + diphosphate. Its function is as follows. DNA-dependent RNA polymerase (RNAP) catalyzes the transcription of DNA into RNA using the four ribonucleoside triphosphates as substrates. The protein is DNA-directed RNA polymerase subunit Rpo12 of Methanocella arvoryzae (strain DSM 22066 / NBRC 105507 / MRE50).